Here is a 301-residue protein sequence, read N- to C-terminus: UDP-3-O-acyl-N-acetylglucosamine deacetylase (301 aa).

Zn(2+) is bound by residues His-75, His-233, and Asp-237. His-260 (proton donor) is an active-site residue.

This sequence belongs to the LpxC family. Zn(2+) serves as cofactor.

It catalyses the reaction a UDP-3-O-[(3R)-3-hydroxyacyl]-N-acetyl-alpha-D-glucosamine + H2O = a UDP-3-O-[(3R)-3-hydroxyacyl]-alpha-D-glucosamine + acetate. It participates in glycolipid biosynthesis; lipid IV(A) biosynthesis; lipid IV(A) from (3R)-3-hydroxytetradecanoyl-[acyl-carrier-protein] and UDP-N-acetyl-alpha-D-glucosamine: step 2/6. Functionally, catalyzes the hydrolysis of UDP-3-O-myristoyl-N-acetylglucosamine to form UDP-3-O-myristoylglucosamine and acetate, the committed step in lipid A biosynthesis. In Aliarcobacter butzleri (strain RM4018) (Arcobacter butzleri), this protein is UDP-3-O-acyl-N-acetylglucosamine deacetylase.